The primary structure comprises 190 residues: Large ribosomal subunit protein eL19 (190 aa).

Disordered regions lie at residues 56–85 (TVHS…KGTK) and 166–190 (NRAA…EAAN). A compositionally biased stretch (basic residues) spans 72 to 83 (AGRHMGYGKRKG). Residues 166–184 (NRAARERRQQRLAEKKEAL) are compositionally biased toward basic and acidic residues.

Belongs to the eukaryotic ribosomal protein eL19 family. Component of the large ribosomal subunit. Mature ribosomes consist of a small (40S) and a large (60S) subunit. The 40S subunit contains about 32 different proteins and 1 molecule of RNA (18S). The 60S subunit contains 45 different proteins and 3 molecules of RNA (25S, 5.8S and 5S).

Its subcellular location is the cytoplasm. Functionally, component of the ribosome, a large ribonucleoprotein complex responsible for the synthesis of proteins in the cell. The small ribosomal subunit (SSU) binds messenger RNAs (mRNAs) and translates the encoded message by selecting cognate aminoacyl-transfer RNA (tRNA) molecules. The large subunit (LSU) contains the ribosomal catalytic site termed the peptidyl transferase center (PTC), which catalyzes the formation of peptide bonds, thereby polymerizing the amino acids delivered by tRNAs into a polypeptide chain. The nascent polypeptides leave the ribosome through a tunnel in the LSU and interact with protein factors that function in enzymatic processing, targeting, and the membrane insertion of nascent chains at the exit of the ribosomal tunnel. RPL19A may play a role in the last stages of translation initiation, in particular subunit joining and shedding/releasing factors. This Candida albicans (strain SC5314 / ATCC MYA-2876) (Yeast) protein is Large ribosomal subunit protein eL19.